The chain runs to 373 residues: Carbamoyl phosphate synthase small chain (373 aa).

The CPSase stretch occupies residues M1 to P179. L-glutamine is bound by residues S47, G230, and G232. A Glutamine amidotransferase type-1 domain is found at T182–R373. Residue C258 is the Nucleophile of the active site. Residues F259, Q262, N300, G302, and F303 each coordinate L-glutamine. Active-site residues include H348 and E350.

This sequence belongs to the CarA family. As to quaternary structure, composed of two chains; the small (or glutamine) chain promotes the hydrolysis of glutamine to ammonia, which is used by the large (or ammonia) chain to synthesize carbamoyl phosphate. Tetramer of heterodimers (alpha,beta)4.

It carries out the reaction hydrogencarbonate + L-glutamine + 2 ATP + H2O = carbamoyl phosphate + L-glutamate + 2 ADP + phosphate + 2 H(+). The enzyme catalyses L-glutamine + H2O = L-glutamate + NH4(+). It functions in the pathway amino-acid biosynthesis; L-arginine biosynthesis; carbamoyl phosphate from bicarbonate: step 1/1. It participates in pyrimidine metabolism; UMP biosynthesis via de novo pathway; (S)-dihydroorotate from bicarbonate: step 1/3. Small subunit of the glutamine-dependent carbamoyl phosphate synthetase (CPSase). CPSase catalyzes the formation of carbamoyl phosphate from the ammonia moiety of glutamine, carbonate, and phosphate donated by ATP, constituting the first step of 2 biosynthetic pathways, one leading to arginine and/or urea and the other to pyrimidine nucleotides. The small subunit (glutamine amidotransferase) binds and cleaves glutamine to supply the large subunit with the substrate ammonia. The sequence is that of Carbamoyl phosphate synthase small chain from Mycolicibacterium paratuberculosis (strain ATCC BAA-968 / K-10) (Mycobacterium paratuberculosis).